The chain runs to 1712 residues: Collagen alpha-2(IV) chain (1712 aa).

The N-terminal stretch at 1–25 (MGRDQRAVAGPALRRWLLLGTVTVG) is a signal peptide. The propeptide at 26–183 (FLAQSVLAGV…LPKEERDRYR (158 aa)) is N-terminal propeptide (7S domain). Disordered stretches follow at residues 60–237 (RGQP…GFYG), 302–448 (GLRG…PDGF), 507–640 (INGE…DAGL), 690–906 (GLPG…SPGF), and 1157–1480 (TGPP…GLPG). Positions 68–84 (PQGYNGPPGLQGFPGLQ) are enriched in low complexity. Over residues 121–130 (GHPGQGGPRG) the composition is skewed to gly residues. N-linked (GlcNAc...) asparagine glycosylation is present at asparagine 138. Over residues 140–153 (TQGDSGPQGPPGSE) the composition is skewed to low complexity. Positions 175 to 186 (PKEERDRYRGEP) are enriched in basic and acidic residues. The tract at residues 184–1484 (GEPGEPGLVG…SPGLPGMPGR (1301 aa)) is triple-helical region. Composition is skewed to pro residues over residues 215–224 (RPGPPGPPGP) and 433–445 (PPGP…PPGP). Composition is skewed to basic and acidic residues over residues 511 to 520 (PGRKGDRGDP) and 571 to 582 (KGDDGSPGRDGL). 2 stretches are compositionally biased toward low complexity: residues 628–640 (LKGQ…DAGL) and 698–710 (TGAK…PGFA). Residues 711–720 (GADGGPGPRG) are compositionally biased toward gly residues. Low complexity predominate over residues 721-730 (LPGDAGREGF). A compositionally biased stretch (pro residues) spans 752-766 (DGSPGPIGLPGPDGP). Low complexity-rich tracts occupy residues 769-778 (ERGLPGEVLG), 813-823 (MPGMPGLKGQP), 831-844 (QPGL…HGFP), 1302-1328 (GSAA…KGWA), and 1400-1421 (QPGT…EMGP). A Collagen IV NC1 domain is found at 1489 to 1712 (GYLLVKHSQT…SRCQVCMKNL (224 aa)). Tyrosine 1490 carries the 3'-bromotyrosine modification. Cystine bridges form between cysteine 1504–cysteine 1593, cysteine 1537–cysteine 1590, cysteine 1549–cysteine 1555, cysteine 1612–cysteine 1708, cysteine 1646–cysteine 1705, and cysteine 1658–cysteine 1665.

The protein belongs to the type IV collagen family. In terms of assembly, there are six type IV collagen isoforms, alpha 1(IV)-alpha 6(IV), each of which can form a triple helix structure with 2 other chains to generate type IV collagen network. Interacts with EFEMP2. Prolines at the third position of the tripeptide repeating unit (G-X-Y) are hydroxylated in some or all of the chains. In terms of processing, type IV collagens contain numerous cysteine residues which are involved in inter- and intramolecular disulfide bonding. 12 of these, located in the NC1 domain, are conserved in all known type IV collagens. Post-translationally, the trimeric structure of the NC1 domains is stabilized by covalent bonds between Lys and Met residues. Proteolytic processing produces the C-terminal NC1 peptide, canstatin.

Its subcellular location is the secreted. It localises to the extracellular space. The protein localises to the extracellular matrix. It is found in the basement membrane. Type IV collagen is the major structural component of glomerular basement membranes (GBM), forming a 'chicken-wire' meshwork together with laminins, proteoglycans and entactin/nidogen. In terms of biological role, canstatin, a cleavage product corresponding to the collagen alpha 2(IV) NC1 domain, possesses both anti-angiogenic and anti-tumor cell activity. It inhibits proliferation and migration of endothelial cells, reduces mitochondrial membrane potential, and induces apoptosis. Specifically induces Fas-dependent apoptosis and activates procaspase-8 and -9 activity. Ligand for alphavbeta3 and alphavbeta5 integrins. The chain is Collagen alpha-2(IV) chain from Homo sapiens (Human).